A 213-amino-acid chain; its full sequence is Riboflavin synthase (213 aa).

Lumazine-binding repeat units lie at residues Met-1 to His-97 and Leu-98 to Val-195. Residues Gly-4–Val-6, Cys-48–Thr-50, Asp-62–Thr-67, Gly-101–Ile-103, Lys-137, Ser-146–Thr-148, and His-160–Thr-165 contribute to the 2,4-dihydroxypteridine site.

In terms of assembly, homotrimer. Unlike in B.subtilis, does not interact with 6,7-dimethyl-8-ribityllumazine synthase.

The catalysed reaction is 2 6,7-dimethyl-8-(1-D-ribityl)lumazine + H(+) = 5-amino-6-(D-ribitylamino)uracil + riboflavin. It functions in the pathway cofactor biosynthesis; riboflavin biosynthesis; riboflavin from 2-hydroxy-3-oxobutyl phosphate and 5-amino-6-(D-ribitylamino)uracil: step 2/2. Catalyzes the dismutation of two molecules of 6,7-dimethyl-8-ribityllumazine, resulting in the formation of riboflavin and 5-amino-6-(D-ribitylamino)uracil. This chain is Riboflavin synthase (ribC), found in Escherichia coli (strain K12).